The following is a 131-amino-acid chain: D-ribose pyranase (131 aa).

The active-site Proton donor is His-20. Substrate contacts are provided by residues Asp-28, His-98, and 120-122 (YAN).

Belongs to the RbsD / FucU family. RbsD subfamily. Homodecamer.

The protein localises to the cytoplasm. It carries out the reaction beta-D-ribopyranose = beta-D-ribofuranose. Its pathway is carbohydrate metabolism; D-ribose degradation; D-ribose 5-phosphate from beta-D-ribopyranose: step 1/2. Functionally, catalyzes the interconversion of beta-pyran and beta-furan forms of D-ribose. The protein is D-ribose pyranase of Bacillus cereus (strain ATCC 10987 / NRS 248).